Consider the following 445-residue polypeptide: MSFRGIVQDLRDGFGSLSRRSFDFRLSSLHKGKAQGSSFREYSSSRDLLSPVIVQTSRWANLPPELLFDVIKRLEESESNWPARKHVVACASVCRSWRAMCQEIVLGPEICGKLTFPVSLKQPGPRDAMIQCFIKRDKSKLTFHLFLCLSPALLVENGKFLLSAKRTRRTTRTEYIISMDADNISRSSNSYLGKLRSNFLGTKFLVYDTQPPPNTSSSALITDRTSRSRFHSRRVSPKVPSGSYNIAQITYELNVLGTRGPRRMHCIMNSIPISSLEPGGSVPNQPEKLVPAPYSLDDSFRSNISFSKSSFDHRSLDFSSSRFSEMGISCDDNEEEASFRPLILKNKQPRWHEQLQCWCLNFRGRVTVASVKNFQLVAARQPQPQGTGAAAAPTSAPAHPEQDKVILQFGKVGKDMFTMDYRYPLSAFQAFAICLSSFDTKLACE.

The F-box domain maps to 57–112; it reads SRWANLPPELLFDVIKRLEESESNWPARKHVVACASVCRSWRAMCQEIVLGPEICG. Low complexity predominate over residues 382–398; that stretch reads PQPQGTGAAAAPTSAPA. Positions 382 to 401 are disordered; it reads PQPQGTGAAAAPTSAPAHPE.

Belongs to the TUB family. Part of a SCF (ASK-cullin-F-box) protein ligase complex. Interacts with SKP1A/ASK1. In terms of tissue distribution, ubiquitous.

It is found in the nucleus. It functions in the pathway protein modification; protein ubiquitination. Functionally, component of SCF(ASK-cullin-F-box) E3 ubiquitin ligase complexes, which may mediate the ubiquitination and subsequent proteasomal degradation of target proteins. This is Tubby-like F-box protein 10 from Arabidopsis thaliana (Mouse-ear cress).